A 489-amino-acid polypeptide reads, in one-letter code: Cytochrome P450 302a1, mitochondrial (489 aa).

Cysteine 434 is a heme binding site.

Belongs to the cytochrome P450 family. It depends on heme as a cofactor. In terms of tissue distribution, complex coexpression pattern of dib (disembodied) and sad (shade) in the early embryo that restricts to the prothoracic gland cells of the developing ring gland during late embryogenesis. In larvae and adult, coexpression is seen in prothoracic gland and follicle cells of the ovary. In adults, coexpression is seen in the follicle cells.

The protein localises to the mitochondrion membrane. It carries out the reaction 2,22-dideoxyecdysone + 2 reduced [adrenodoxin] + O2 + 2 H(+) = 2-deoxyecdysone + 2 oxidized [adrenodoxin] + H2O. It participates in steroid biosynthesis; ecdysteroid biosynthesis. Required for CNS development; negatively regulates glial cell division in the embryonic midline. Involved in the metabolism of insect hormones; responsible for ecdysteroid C22-hydroxylase activity. May be involved in the breakdown of synthetic insecticides. This Drosophila melanogaster (Fruit fly) protein is Cytochrome P450 302a1, mitochondrial.